The primary structure comprises 561 residues: MITIPITLRMLIAKYLCLLKPFWLRKNNKTSVLLIIIILAMILGVVKIQVWLNDWNNDFFNALSQKETDKLWQLVLWFPALLGIFVLISVNKTWLIKLLTIRWREWLTDYYLNRWFADKNYYFTQIYGEHKNTDNPDQRIAEDILLLISKTLSLSFGFIQSLSMLITFTVILWESAGTLSFTVGGTEWNIQGYMVYTVVLIVIGGTLFTHKVGKRIRPLNVEKQRSEATFRTNLVQHNKQAELIALSNAESLQRQELSDNFHTIKENWHRLMNRQRWLDYWQNIYSRSLSVLPYFLLLPQFISGQINLGGLMKSRQAFMLVSNNLSWFIYKYDELAELAAVIDRLYEFHQLTEQRPTNKPKNCQHAVQVADASIRTPDNKIILENLNFHVSPGKWLLLKGYSGAGKTTLLKTLSHCWPWFKGDISSPADSWYVSQTPLIKTGLLKEIICKALPLPVDDKSLSEVLHQVGLGKLAARIHDHDRWGDILSSGEKQRIALARLILRRPKWIFLDETTSHLEEQEAIRLLRLVREKLPTSGVIMVTHQPGVWNLADDICDISAVL.

Residues 1-3 (MIT) are Cytoplasmic-facing. The chain crosses the membrane as a helical span at residues 4-24 (IPITLRMLIAKYLCLLKPFWL). At 25 to 31 (RKNNKTS) the chain is on the periplasmic side. A helical membrane pass occupies residues 32 to 52 (VLLIIIILAMILGVVKIQVWL). An ABC transmembrane type-1 domain is found at 35–337 (IIIILAMILG…FIYKYDELAE (303 aa)). Topologically, residues 53–70 (NDWNNDFFNALSQKETDK) are cytoplasmic. The helical transmembrane segment at 71-91 (LWQLVLWFPALLGIFVLISVN) threads the bilayer. Over 92–151 (KTWLIKLLTIRWREWLTDYYLNRWFADKNYYFTQIYGEHKNTDNPDQRIAEDILLLISKT) the chain is Periplasmic. A helical transmembrane segment spans residues 152-172 (LSLSFGFIQSLSMLITFTVIL). The Cytoplasmic segment spans residues 173-187 (WESAGTLSFTVGGTE). Residues 188–208 (WNIQGYMVYTVVLIVIGGTLF) traverse the membrane as a helical segment. Residues 209–290 (THKVGKRIRP…WQNIYSRSLS (82 aa)) are Periplasmic-facing. A helical transmembrane segment spans residues 291-311 (VLPYFLLLPQFISGQINLGGL). Over 312-561 (MKSRQAFMLV…DDICDISAVL (250 aa)) the chain is Cytoplasmic. One can recognise an ABC transporter domain in the interval 367–561 (VQVADASIRT…DDICDISAVL (195 aa)). 400–407 (GYSGAGKT) serves as a coordination point for ATP.

It belongs to the ABC transporter superfamily.

It is found in the cell inner membrane. The chain is Inner membrane ABC transporter ATP-binding protein YddA (yddA) from Escherichia coli (strain K12).